The sequence spans 466 residues: Ribulose bisphosphate carboxylase large chain (466 aa).

K4 carries the post-translational modification N6,N6,N6-trimethyllysine. Residues N113 and T163 each contribute to the substrate site. The Proton acceptor role is filled by K165. K167 is a substrate binding site. Mg(2+)-binding residues include K191, D193, and E194. K191 is subject to N6-carboxylysine. Residue H284 is the Proton acceptor of the active site. R285, H317, and S369 together coordinate substrate.

Belongs to the RuBisCO large chain family. Type I subfamily. As to quaternary structure, heterohexadecamer of 8 large chains and 8 small chains; disulfide-linked. The disulfide link is formed within the large subunit homodimers. Requires Mg(2+) as cofactor. In terms of processing, the disulfide bond which can form in the large chain dimeric partners within the hexadecamer appears to be associated with oxidative stress and protein turnover.

The protein resides in the plastid. It localises to the chloroplast. It catalyses the reaction 2 (2R)-3-phosphoglycerate + 2 H(+) = D-ribulose 1,5-bisphosphate + CO2 + H2O. The catalysed reaction is D-ribulose 1,5-bisphosphate + O2 = 2-phosphoglycolate + (2R)-3-phosphoglycerate + 2 H(+). In terms of biological role, ruBisCO catalyzes two reactions: the carboxylation of D-ribulose 1,5-bisphosphate, the primary event in carbon dioxide fixation, as well as the oxidative fragmentation of the pentose substrate in the photorespiration process. Both reactions occur simultaneously and in competition at the same active site. This chain is Ribulose bisphosphate carboxylase large chain, found in Nelsonia canescens (Blue pussyleaf).